We begin with the raw amino-acid sequence, 165 residues long: Small ribosomal subunit protein uS5 (165 aa).

One can recognise an S5 DRBM domain in the interval Leu-13 to Val-76.

Belongs to the universal ribosomal protein uS5 family. In terms of assembly, part of the 30S ribosomal subunit. Contacts proteins S4 and S8.

Its function is as follows. With S4 and S12 plays an important role in translational accuracy. Functionally, located at the back of the 30S subunit body where it stabilizes the conformation of the head with respect to the body. The chain is Small ribosomal subunit protein uS5 from Oenococcus oeni (strain ATCC BAA-331 / PSU-1).